The primary structure comprises 430 residues: Sorting nexin-30 (430 aa).

Polar residues predominate over residues 1-18; sequence MSNGGTPRSLPSSGQKSI. The segment at 1-66 is disordered; sequence MSNGGTPRSL…SSPASSSSLL (66 aa). Low complexity predominate over residues 57–66; that stretch reads SSPASSSSLL. Positions 80–201 constitute a PX domain; that stretch reads RDLFVTVDDP…AFLSAKDLNK (122 aa). The a 1,2-diacyl-sn-glycero-3-phospho-(1D-myo-inositol-3-phosphate) site is built by Arg-123, Gln-125, Lys-153, and Arg-167. A BAR domain is found at 223–428; that stretch reads KLRGRPVEFA…LQDKQDAKGE (206 aa).

This sequence belongs to the sorting nexin family.

It is found in the early endosome membrane. Functionally, involved in the regulation of endocytosis and in several stages of intracellular trafficking. Together with snx4, involved in autophagosome assembly. This is Sorting nexin-30 (snx30) from Danio rerio (Zebrafish).